The primary structure comprises 66 residues: Transmembrane protein B66L (66 aa).

A signal peptide spans 1 to 20 (MDIKRALILFLLFLVVLSNA). Residues 21–40 (FVDYIISNFNHAVTCRKPTY) lie on the Extracellular side of the membrane. The helical transmembrane segment at 41 to 61 (FGIVLQGIFLVILFSIVDYLI) threads the bilayer. At 62–66 (NENIL) the chain is on the cytoplasmic side.

It belongs to the asfivirus B66L family.

The protein resides in the host membrane. The chain is Transmembrane protein B66L from Ornithodoros (relapsing fever ticks).